Consider the following 372-residue polypeptide: Protein phosphatase 1 regulatory subunit 42 (372 aa).

LRR repeat units lie at residues 30-51 (RITH…TMCR), 52-71 (NLTV…NLGS), 72-93 (NLTH…SGLK), 94-115 (RLEK…EGLR), 116-137 (ELRE…LFDP), 146-167 (SLSV…AVLE), and 168-189 (NLTQ…EFVL). The LRRCT domain maps to 203–241 (NPVCLKPKYREKVTIISKTLEILDGKEIKEMARQFLLNW).

It is found in the cytoplasm. The protein resides in the cytoskeleton. The protein localises to the microtubule organizing center. Its subcellular location is the centrosome. Its function is as follows. May regulate phosphatase activity of protein phosphatase 1 (PP1) complexes. In Xenopus laevis (African clawed frog), this protein is Protein phosphatase 1 regulatory subunit 42 (ppp1r42).